The following is a 170-amino-acid chain: UPF0316 protein CLJ_B0679 (170 aa).

The next 2 helical transmembrane spans lie at 1 to 21 (MLSY…LMTI) and 36 to 56 (IIGF…LSGI).

The protein belongs to the UPF0316 family.

The protein resides in the cell membrane. The protein is UPF0316 protein CLJ_B0679 of Clostridium botulinum (strain 657 / Type Ba4).